Consider the following 260-residue polypeptide: Pyridoxine 5'-phosphate synthase (260 aa).

Position 15 (Asn15) interacts with 3-amino-2-oxopropyl phosphate. Position 17–18 (17–18 (DH)) interacts with 1-deoxy-D-xylulose 5-phosphate. Arg26 is a 3-amino-2-oxopropyl phosphate binding site. His51 (proton acceptor) is an active-site residue. 1-deoxy-D-xylulose 5-phosphate contacts are provided by Arg53 and His58. Glu78 functions as the Proton acceptor in the catalytic mechanism. 1-deoxy-D-xylulose 5-phosphate is bound at residue Thr108. His199 (proton donor) is an active-site residue. 3-amino-2-oxopropyl phosphate-binding positions include Gly200 and 221–222 (GH).

It belongs to the PNP synthase family. As to quaternary structure, homooctamer; tetramer of dimers.

It is found in the cytoplasm. The catalysed reaction is 3-amino-2-oxopropyl phosphate + 1-deoxy-D-xylulose 5-phosphate = pyridoxine 5'-phosphate + phosphate + 2 H2O + H(+). It functions in the pathway cofactor biosynthesis; pyridoxine 5'-phosphate biosynthesis; pyridoxine 5'-phosphate from D-erythrose 4-phosphate: step 5/5. Its function is as follows. Catalyzes the complicated ring closure reaction between the two acyclic compounds 1-deoxy-D-xylulose-5-phosphate (DXP) and 3-amino-2-oxopropyl phosphate (1-amino-acetone-3-phosphate or AAP) to form pyridoxine 5'-phosphate (PNP) and inorganic phosphate. The protein is Pyridoxine 5'-phosphate synthase of Cupriavidus pinatubonensis (strain JMP 134 / LMG 1197) (Cupriavidus necator (strain JMP 134)).